We begin with the raw amino-acid sequence, 543 residues long: Cyclohexanone 1,2-monooxygenase (543 aa).

Residues Phe-16, Asp-37, Trp-46, Asp-57, Tyr-63, and Val-110 each coordinate FAD.

This sequence belongs to the FAD-binding monooxygenase family. FAD is required as a cofactor.

It catalyses the reaction cyclohexanone + NADPH + O2 + H(+) = hexano-6-lactone + NADP(+) + H2O. The protein is Cyclohexanone 1,2-monooxygenase of Acinetobacter sp.